The chain runs to 224 residues: UPF0758 protein VCM66_0205 (224 aa).

A disordered region spans residues 1-20 (MSLKQLPTESMPREKLLQRG). In terms of domain architecture, MPN spans 102-224 (ALTSPQQTKL…VVSFAERGWI (123 aa)). Positions 173, 175, and 186 each coordinate Zn(2+). The short motif at 173 to 186 (HNHPSGVAEPSQAD) is the JAMM motif element.

Belongs to the UPF0758 family.

This Vibrio cholerae serotype O1 (strain M66-2) protein is UPF0758 protein VCM66_0205.